Here is a 271-residue protein sequence, read N- to C-terminus: MRWTKEELDRYHRQMILPQVGPEGQERLKRASVVVVGAGGLGVPVLQYLVAAGVGRVGVVEMDRVEVSNLHRQVLYTTEDVGEPKALVAQKRLQALNPLVRVEAYPVRLTSENALEILRPYDLVVDASDNFPTRYLVNDAAVLLGKPLVFGAIYQFDGQVAVFHHPTLHGEMGPCYRCLFPKPPPPGAVPSCAEAGVFGVLPAVVGSLMAAEALKVLLGIGKPLAGHLLLYDALEASFRKLTVRRNPRCPVCGDEPTQRELVDYEAFCGLR.

ATP-binding positions include Arg-13, Gly-40, Glu-61, Arg-72, Lys-85, Leu-109, and 129-133 (DNFPT). Zn(2+) contacts are provided by Cys-175 and Cys-178. A Glycyl cysteine thioester (Cys-Gly) (interchain with G-Cter in TtuB) cross-link involves residue Cys-192. Residues Cys-249 and Cys-252 each contribute to the Zn(2+) site.

This sequence belongs to the HesA/MoeB/ThiF family. It depends on Zn(2+) as a cofactor. Conjugated to TtuB via a covalent linkage that likely involves a lysine residue. Is able to form a covalent thioester adduct with TtuB via Cys-192 in vitro.

It catalyses the reaction [molybdopterin-synthase sulfur-carrier protein]-C-terminal Gly-Gly + ATP + H(+) = [molybdopterin-synthase sulfur-carrier protein]-C-terminal Gly-Gly-AMP + diphosphate. The enzyme catalyses [ThiS sulfur-carrier protein]-C-terminal Gly-Gly + ATP + H(+) = [ThiS sulfur-carrier protein]-C-terminal Gly-Gly-AMP + diphosphate. It carries out the reaction [TtuB sulfur-carrier protein]-C-terminal Gly-Gly + ATP + H(+) = [TtuB sulfur-carrier protein]-C-terminal Gly-Gly-AMP + diphosphate. It participates in tRNA modification. Its pathway is cofactor biosynthesis; thiamine diphosphate biosynthesis. The protein operates within cofactor biosynthesis; molybdopterin biosynthesis. With respect to regulation, enzymatic activity may be regulated by TtuB conjugation. Its function is as follows. Adenylyltransferase involved in the biosynthesis of several sulfur compounds. Is required for the 2-thiolation of 5-methyluridine residue at position 54 in the T loop of tRNAs, leading to 5-methyl-2-thiouridine (m(5)s(2)U or s(2)T). This modification allows thermal stabilization of tRNAs in thermophilic microorganisms, and is essential for cell growth at high temperatures. TtuC catalyzes the adenylation by ATP of the carboxyl group of the C-terminal glycine of sulfur carrier protein TtuB. Is also involved in the biosynthesis of thiamine, molybdenum cofactor (Moco) and probably tungsten cofactor (Wco), by adenylating the sulfur carriers ThiS and MoaD. Is required for the conjugation of TtuB to target proteins. In Thermus thermophilus (strain ATCC BAA-163 / DSM 7039 / HB27), this protein is Sulfur carrier protein adenylyltransferase.